Here is a 346-residue protein sequence, read N- to C-terminus: MALSRVDVINMRIWVLSIICACLTYVNVTVHLVAVHFPNLGFPCAYYEINDMKAINLSIRNDIRSLTPQLYLNPIQLICYVVFMDICFFFILVYYIVCCVKVFSSEKTPNINQSTRDITWMGDSLSCFQFVLTMDTYQFFVTCLSFRLVTLAAFTYCLFFICFTAFTLTMITQYQSSERSFFVLKRIHPKLKGTIKYKTIIINMIELMLGFSSMVFAITICLGLGNNFYIKSSTVAFASINTFFVMSFVYSLVIELILHQYVKVQFGLHFGILFGILGLTYPILKYDSLFKTEWTVKFIVNLAVITIVCLSFIICRLIRFFMRKHHNYKKLPTTVEDLDVLEEANE.

Topologically, residues M1–R12 are intravirion. The helical transmembrane segment at I13 to V33 threads the bilayer. Residues A34 to Q76 lie on the Virion surface side of the membrane. The chain crosses the membrane as a helical span at residues L77–V97. At C98–D117 the chain is on the intravirion side. A helical transmembrane segment spans residues I118–F140. The Virion surface segment spans residues V141 to R147. Residues L148–L168 traverse the membrane as a helical segment. Residues T169–T199 lie on the Intravirion side of the membrane. The chain crosses the membrane as a helical span at residues I200 to I220. The Virion surface portion of the chain corresponds to C221–A236. The chain crosses the membrane as a helical span at residues F237–I257. Residues L258 to K263 lie on the Intravirion side of the membrane. Residues V264 to L284 form a helical membrane-spanning segment. The Virion surface segment spans residues K285–E293. The helical transmembrane segment at W294–I314 threads the bilayer. The Intravirion segment spans residues C315–E346.

Belongs to the herpesviridae glycoprotein M family. In terms of assembly, interacts (via N-terminus) with gN (via N-terminus). The gM-gN heterodimer forms the gCII complex.

It localises to the virion membrane. The protein localises to the host Golgi apparatus. The protein resides in the host trans-Golgi network. It is found in the host endosome membrane. Its subcellular location is the host nucleus inner membrane. In terms of biological role, envelope glycoprotein important for virion assembly and egress. Plays a role in the correct incorporation of gH-gL into virion membrane. Directs the glycoprotein N (gN) to the host trans-Golgi network. The polypeptide is Envelope glycoprotein M (Homo sapiens (Human)).